Here is a 92-residue protein sequence, read N- to C-terminus: Small ribosomal subunit protein uS19 (92 aa).

The protein belongs to the universal ribosomal protein uS19 family.

Protein S19 forms a complex with S13 that binds strongly to the 16S ribosomal RNA. The polypeptide is Small ribosomal subunit protein uS19 (Beijerinckia indica subsp. indica (strain ATCC 9039 / DSM 1715 / NCIMB 8712)).